The following is a 67-amino-acid chain: Large ribosomal subunit protein uL29 (67 aa).

The protein belongs to the universal ribosomal protein uL29 family.

This Magnetococcus marinus (strain ATCC BAA-1437 / JCM 17883 / MC-1) protein is Large ribosomal subunit protein uL29.